A 220-amino-acid chain; its full sequence is MTQLTREQVLELFHQRSSTRYYDPTKKISDEDFECILECGRLSPSSVGSEPWKFLVIQNKTLREKMKPFSWGMINQLDNCSHLVVILAKKNARYDSPFFVDVMARKGLNAEQQQAALTKYKALQEEDMKLLENDRTLFDWCSKQTYIALANMLTGASALGIDSCPIEGFHYDKMNECLAEEGLFDPQEYAVSVAATFGYRSRDIAKKSRKGLDEVVKWVG.

Position 155-160 (155-160 (GASALG)) interacts with NAD(+).

This sequence belongs to the nitroreductase family. It depends on FMN as a cofactor.

In Haemophilus influenzae (strain ATCC 51907 / DSM 11121 / KW20 / Rd), this protein is Putative NAD(P)H nitroreductase.